The chain runs to 21 residues: Fibrinogen beta chain (21 aa).

Pyrrolidone carboxylic acid is present on glutamine 1. The segment covering 1-11 has biased composition (acidic residues); it reads QHSTDYDEEEE. The segment at 1 to 21 is disordered; sequence QHSTDYDEEEEDRAKLHLDAR. Threonine 4 carries an O-linked (GalNAc...) threonine glycan. Residue tyrosine 6 is modified to Sulfotyrosine. Residues 12-21 are compositionally biased toward basic and acidic residues; it reads DRAKLHLDAR.

Heterohexamer; disulfide linked. Contains 2 sets of 3 non-identical chains (alpha, beta and gamma). The 2 heterotrimers are in head to head conformation with the N-termini in a small central domain. In terms of processing, conversion of fibrinogen to fibrin is triggered by thrombin, which cleaves fibrinopeptides A and B from alpha and beta chains, and thus exposes the N-terminal polymerization sites responsible for the formation of the soft clot.

Its subcellular location is the secreted. Cleaved by the protease thrombin to yield monomers which, together with fibrinogen alpha (FGA) and fibrinogen gamma (FGG), polymerize to form an insoluble fibrin matrix. Fibrin has a major function in hemostasis as one of the primary components of blood clots. In addition, functions during the early stages of wound repair to stabilize the lesion and guide cell migration during re-epithelialization. Was originally thought to be essential for platelet aggregation, based on in vitro studies using anticoagulated blood. However subsequent studies have shown that it is not absolutely required for thrombus formation in vivo. Enhances expression of SELP in activated platelets. Maternal fibrinogen is essential for successful pregnancy. Fibrin deposition is also associated with infection, where it protects against IFNG-mediated hemorrhage. May also facilitate the antibacterial immune response via both innate and T-cell mediated pathways. The polypeptide is Fibrinogen beta chain (FGB) (Cervus elaphus (Red deer)).